A 468-amino-acid chain; its full sequence is Flavin-containing monooxygenase FMO GS-OX-like 1 (468 aa).

An FAD-binding site is contributed by 16-21 (GLGAAG). 211–216 (GSQASG) serves as a coordination point for NADP(+).

It belongs to the FMO family. The cofactor is FAD.

Its function is as follows. Catalyzes the conversion of methylthioalkyl glucosinolates of any chain length into methylsulfinylalkyl glucosinolates. In Arabidopsis thaliana (Mouse-ear cress), this protein is Flavin-containing monooxygenase FMO GS-OX-like 1.